Reading from the N-terminus, the 619-residue chain is Low-temperature-induced 65 kDa protein (619 aa).

Disordered stretches follow at residues 1–383 (MESQ…STYT) and 408–429 (LGYT…ETPR). Basic and acidic residues predominate over residues 9–33 (YGHEQAEEPIRIHHPEEEEHHEKGA). The span at 36–48 (VLKKVKEKAKKIK) shows a compositional bias: basic residues. The span at 62–73 (VEDDDDEYDEQD) shows a compositional bias: acidic residues. Residues 175–186 (FSDRGESREAHQ) show a composition bias toward basic and acidic residues. The span at 188–197 (PLNTPVSLLS) shows a compositional bias: polar residues. A compositionally biased stretch (basic and acidic residues) spans 221 to 231 (VNVETPKRLEE). Over residues 245 to 254 (GVSNYQSKVT) the composition is skewed to polar residues. Composition is skewed to basic and acidic residues over residues 276–309 (KVTD…ESDI) and 323–337 (AGME…DVKV). A run of 5 repeats spans residues 404 to 408 (VASKL), 442 to 446 (VAEKL), 460 to 464 (VMTKL), 490 to 494 (ISEKL), and 507 to 511 (IAEKL). Positions 404–511 (VASKLGYTGE…ALSEMIAEKL (108 aa)) are 5 X 5 AA repeats of [IV]-[AMS]-[EST]-K-L. The segment at 461-485 (MTKLPLSGGGSGVKETQQGEEKGVT) is disordered. Phosphoserine is present on Ser-536. Residues 537-555 (DQIAEGKGHGEAVAEEGKG) are compositionally biased toward basic and acidic residues. The interval 537–619 (DQIAEGKGHG…GGKGVQDSGN (83 aa)) is disordered. The span at 583–593 (ESPQSLGTTVG) shows a compositional bias: polar residues. Over residues 603–613 (SELGGSGGGKG) the composition is skewed to gly residues.

It belongs to the LTI78/LTI65 family.

This Arabidopsis thaliana (Mouse-ear cress) protein is Low-temperature-induced 65 kDa protein (LTI65).